The following is a 499-amino-acid chain: Neuronal acetylcholine receptor subunit alpha-7 (499 aa).

The signal sequence occupies residues 1–19 (MRGSLCLALAASILHVSLQ). At 20–230 (GEFQRKLYKD…VSIRRRTLYY (211 aa)) the chain is on the extracellular side. Residues R39 and V41 each contribute to the Ca(2+) site. N-linked (GlcNAc...) asparagine glycosylation is found at N43, N87, and N130. C147 and C161 are oxidised to a cystine. Residues S169 and Y207 each contribute to the Ca(2+) site. A disulfide bond links C209 and C210. 3 helical membrane passes run 231–251 (GLNL…VFLL), 259–279 (ISLG…VAEI), and 292–312 (QYFA…VIVL). The interval 257–264 (EKISLGIT) is essential for TMEM35A/NACHO-mediated proper subunit assembly and trafficking to cell membrane. The Cytoplasmic segment spans residues 313–466 (QYHHHDPDGG…WKFAACVVDR (154 aa)). A helical transmembrane segment spans residues 467–487 (LCLMAFSVFTILCTIGILMSA).

This sequence belongs to the ligand-gated ion channel (TC 1.A.9) family. Acetylcholine receptor (TC 1.A.9.1) subfamily. Alpha-7/CHRNA7 sub-subfamily. As to quaternary structure, homopentamer. Homooligomer of the short form gives rise to unfunctional channels, as does coexpression of both long and short forms of the receptor. Can also form heteropentamers with CHRNB2, mainly found in basal forebrain cholinergic neurons. Interacts with RIC3; which is required for proper folding and assembly. Interacts with LYPD6. Interacts with CANX. Glycosylations at Asn-43, Asn-87 and Asn-130 are essential for TMEM35A/NACHO-mediated proper subunit assembly and trafficking to the cell membrane. In terms of tissue distribution, at least in chromaffin cells.

The protein resides in the postsynaptic cell membrane. It is found in the cell membrane. The catalysed reaction is Ca(2+)(in) = Ca(2+)(out). It carries out the reaction K(+)(in) = K(+)(out). The enzyme catalyses Na(+)(in) = Na(+)(out). It catalyses the reaction choline(out) = choline(in). The catalysed reaction is NH4(+)(in) = NH4(+)(out). It carries out the reaction L-arginine(in) = L-arginine(out). The enzyme catalyses guanidine(out) = guanidine(in). Activated by a myriad of ligands such as acetylcholine, cytisine, nicotine, choline and epibatidine. Oligomeric amyloid-beta protein 42 activates specifially CHRNA7:CHRNB2 nAchRs. Activity is modulated by positive allosteric modulators (PAMs), such as flavonoids, with a wide range of chemical diversity, pharmacological sensitivity and efficacy. AChR activity is inhibited by the antagonists alpha-conotoxons RgIA, ImI and ImII, small disulfide-constrained peptides from cone snails. Alpha-conotoxin PnIC selectively inhibits CHRNA7:CHRNB2 over CHRNA7 homopentamer. Functionally, component of neuronal acetylcholine receptors (nAChRs) that function as pentameric, ligand-gated cation channels with high calcium permeability among other activities. nAChRs are excitatory neurotrasnmitter receptors formed by a collection of nAChR subunits known to mediate synaptic transmission in the nervous system and the neuromuscular junction. Each nAchR subunit confers differential attributes to channel properties, including activation, deactivation and desensitization kinetics, pH sensitivity, cation permeability, and binding to allosteric modulators. CHRNA7 forms homopentameric neuronal acetylcholine receptors abundantly expressed in the central nervous system, characterized by fast desensitization and high calcium permeability. Also forms heteropentamers with CHRNB2, mainly expressed in basal forebrain cholinergic neurons. Involved in the modulation of calcium-dependent signaling pathways and influences the release of neurotransmitters, including dopamine, glutamate and GABA. Also expressed in non-neuronal cells such as immune cells like lymphocytes, monocytes and macrophages. In T cells, activation induces metabotropic signaling that results in an increase of intracellular Ca2+ concentrations, independent of ionotropic receptor functions. In macrophages, required for acetylcholine-mediated inhibition of TNF and other inflammatory cytokine release. Once activated by acetylcholine, nicotine or other agonists, selectively inhibits production of pro-inflammatory cytokines while leaving anti-inflammatory cytokines undisturbed. Stimulates the cholinergic anti-inflammatory pathway, controlling inflammation by inhibiting NFKB nuclear translocation and activating the JAK2-STAT3 pathway, independently of ion channel activity. Also expressed in the urothelium where it modulates reflex bladder activity by increasing intracellular calcium through internal stores and decreasing basal ATP release. The sequence is that of Neuronal acetylcholine receptor subunit alpha-7 (CHRNA7) from Bos taurus (Bovine).